We begin with the raw amino-acid sequence, 212 residues long: Transmembrane emp24 domain-containing protein p24delta4 (212 aa).

Positions 1–25 (MKKKMIPTTILLSALIFSLSPICEA) are cleaved as a signal peptide. The Lumenal segment spans residues 26–179 (VWLTVPHTGS…RIVSEKTNSR (154 aa)). The region spanning 35-147 (SKCVSEEIQS…IEGVELEFKK (113 aa)) is the GOLD domain. N-linked (GlcNAc...) asparagine glycosylation occurs at N82. Positions 133–155 (ARKEKIEGVELEFKKLEGAVEAI) form a coiled coil. 2 positions are modified to omega-N-methylated arginine: R165 and R170. A helical membrane pass occupies residues 180 to 200 (VAWYSIMSLGICIVVSGLQIL). At 201–212 (YLKQYFEKKKLI) the chain is on the cytoplasmic side. The COPII vesicle coat-binding motif lies at 205 to 206 (YF). Residues 205–212 (YFEKKKLI) carry the COPI vesicle coat-binding motif.

The protein belongs to the EMP24/GP25L family. As to quaternary structure, probably oligomerizes with other members of the EMP24/GP25L family. Associates with the COPI vesicle coat (coatomer). Associates with the COPII vesicle coat (coatomer).

It is found in the endoplasmic reticulum membrane. The protein localises to the golgi apparatus membrane. Involved in vesicular protein trafficking. Mainly functions in the early secretory pathway. Required for trafficking GLL23, a component of the PYK10 complex. May act as a receptor facilitating its packing into COPII carriers and export from the endoplasmic reticulum. The sequence is that of Transmembrane emp24 domain-containing protein p24delta4 (CYB) from Arabidopsis thaliana (Mouse-ear cress).